We begin with the raw amino-acid sequence, 127 residues long: Large ribosomal subunit protein uL24 (127 aa).

It belongs to the universal ribosomal protein uL24 family. As to quaternary structure, part of the 50S ribosomal subunit.

In terms of biological role, one of two assembly initiator proteins, it binds directly to the 5'-end of the 23S rRNA, where it nucleates assembly of the 50S subunit. Functionally, one of the proteins that surrounds the polypeptide exit tunnel on the outside of the subunit. This Leptospira biflexa serovar Patoc (strain Patoc 1 / ATCC 23582 / Paris) protein is Large ribosomal subunit protein uL24.